The chain runs to 221 residues: Probable molybdenum cofactor guanylyltransferase (221 aa).

GTP contacts are provided by residues 17–19, Lys-29, Asp-74, and Asp-103; that span reads LAG. A Mg(2+)-binding site is contributed by Asp-103.

The protein belongs to the MobA family. It depends on Mg(2+) as a cofactor.

It localises to the cytoplasm. The catalysed reaction is Mo-molybdopterin + GTP + H(+) = Mo-molybdopterin guanine dinucleotide + diphosphate. Its function is as follows. Transfers a GMP moiety from GTP to Mo-molybdopterin (Mo-MPT) cofactor (Moco or molybdenum cofactor) to form Mo-molybdopterin guanine dinucleotide (Mo-MGD) cofactor. The chain is Probable molybdenum cofactor guanylyltransferase from Peptoclostridium acidaminophilum (Eubacterium acidaminophilum).